A 503-amino-acid polypeptide reads, in one-letter code: Potassium voltage-gated channel subfamily V member 1 (503 aa).

Disordered stretches follow at residues 1–20 (MDLSPRNRPLLDSSSLDSGS) and 171–192 (KKDTDDQESQHESEQDFSQGPC). The Cytoplasmic portion of the chain corresponds to 3–213 (LSPRNRPLLD…EKPGSSTAAR (211 aa)). Residues 10–20 (LLDSSSLDSGS) show a composition bias toward low complexity. The segment covering 171 to 184 (KKDTDDQESQHESE) has biased composition (basic and acidic residues). Residues 214–234 (IFGVISIIFVAVSIVNMALMS) traverse the membrane as a helical segment. Residues 235 to 241 (AELSWLN) are Extracellular-facing. The chain crosses the membrane as a helical span at residues 242 to 262 (LQLLEILEYVCISWFTGEFIL). The Cytoplasmic portion of the chain corresponds to 263 to 279 (RFLCVKDRCHFLRKVPN). The chain crosses the membrane as a helical span at residues 280-300 (IIDLLAILPFYITLLVESLSG). The Extracellular segment spans residues 301 to 312 (SHTTQELENVGR). A helical; Voltage-sensor membrane pass occupies residues 313-334 (LVQVLRLLRALRMLKLGRHSTG). Residues 335–348 (LRSLGMTITQCYEE) are Cytoplasmic-facing. Residues 349-369 (VGLLLLFLSVGISIFSTIEYF) traverse the membrane as a helical segment. Positions 395–400 (TVGYGD) match the Selectivity filter motif. The helical transmembrane segment at 410–430 (IVAFMCILSGILVLALPIAII) threads the bilayer. The Cytoplasmic segment spans residues 431–503 (NDRFSACYFT…RSSGGDDFWF (73 aa)).

The protein belongs to the potassium channel family. V (TC 1.A.1.2) subfamily. Kv8.1/KCNV1 sub-subfamily. As to quaternary structure, heteromultimer with KCNB1 and KCNB2. Interacts with KCNC4 and KCND1. Detected in brain, in neocortex, olfactory tubercle, hippocampus, dentate gyrus, piriform cortex and amygdala. Detected in Purkinje cells and granular cells of the cerebellum, in hippocampal CA4 neurons and neocortex pyramidal cells.

It localises to the cell membrane. Functionally, potassium channel subunit that does not form functional channels by itself. Modulates KCNB1 and KCNB2 channel activity by shifting the threshold for inactivation to more negative values and by slowing the rate of inactivation. Can down-regulate the channel activity of KCNB1, KCNB2, KCNC4 and KCND1, possibly by trapping them in intracellular membranes. In Rattus norvegicus (Rat), this protein is Potassium voltage-gated channel subfamily V member 1 (Kcnv1).